We begin with the raw amino-acid sequence, 291 residues long: Hydroxysteroid 11-beta-dehydrogenase 1-like protein A (291 aa).

An N-terminal signal peptide occupies residues 1–18 (MAGVKLLLLSLCVGYTAY). NADP(+) is bound by residues 40–66 (GSST…TARR), 91–92 (DM), and 118–120 (NHI). Serine 170 contacts substrate. Catalysis depends on tyrosine 183, which acts as the Proton acceptor. NADP(+) is bound by residues 183–187 (YCASK) and 216–222 (GYIDTEN).

The protein belongs to the short-chain dehydrogenases/reductases (SDR) family.

The protein localises to the secreted. The catalysed reaction is cortisone + NADPH + H(+) = cortisol + NADP(+). Functionally, unidirectional NADP(+)-dependent cortisol dehydrogenase (in vitro). In Xenopus laevis (African clawed frog), this protein is Hydroxysteroid 11-beta-dehydrogenase 1-like protein A (hsd11b1l-a).